We begin with the raw amino-acid sequence, 240 residues long: UDP-2,3-diacylglucosamine hydrolase (240 aa).

Positions 8, 10, 41, 79, and 114 each coordinate Mn(2+). 79 to 80 (NR) contributes to the substrate binding site. Substrate-binding residues include Asp-122, Ser-160, Asn-164, Lys-167, and His-195. Mn(2+)-binding residues include His-195 and His-197.

It belongs to the LpxH family. The cofactor is Mn(2+).

The protein resides in the cell inner membrane. The enzyme catalyses UDP-2-N,3-O-bis[(3R)-3-hydroxytetradecanoyl]-alpha-D-glucosamine + H2O = 2-N,3-O-bis[(3R)-3-hydroxytetradecanoyl]-alpha-D-glucosaminyl 1-phosphate + UMP + 2 H(+). The protein operates within glycolipid biosynthesis; lipid IV(A) biosynthesis; lipid IV(A) from (3R)-3-hydroxytetradecanoyl-[acyl-carrier-protein] and UDP-N-acetyl-alpha-D-glucosamine: step 4/6. In terms of biological role, hydrolyzes the pyrophosphate bond of UDP-2,3-diacylglucosamine to yield 2,3-diacylglucosamine 1-phosphate (lipid X) and UMP by catalyzing the attack of water at the alpha-P atom. Involved in the biosynthesis of lipid A, a phosphorylated glycolipid that anchors the lipopolysaccharide to the outer membrane of the cell. In Salmonella paratyphi C (strain RKS4594), this protein is UDP-2,3-diacylglucosamine hydrolase.